A 258-amino-acid chain; its full sequence is Imidazole glycerol phosphate synthase subunit HisF (258 aa).

Catalysis depends on residues D11 and D130.

Belongs to the HisA/HisF family. Heterodimer of HisH and HisF.

The protein localises to the cytoplasm. The enzyme catalyses 5-[(5-phospho-1-deoxy-D-ribulos-1-ylimino)methylamino]-1-(5-phospho-beta-D-ribosyl)imidazole-4-carboxamide + L-glutamine = D-erythro-1-(imidazol-4-yl)glycerol 3-phosphate + 5-amino-1-(5-phospho-beta-D-ribosyl)imidazole-4-carboxamide + L-glutamate + H(+). The protein operates within amino-acid biosynthesis; L-histidine biosynthesis; L-histidine from 5-phospho-alpha-D-ribose 1-diphosphate: step 5/9. Its function is as follows. IGPS catalyzes the conversion of PRFAR and glutamine to IGP, AICAR and glutamate. The HisF subunit catalyzes the cyclization activity that produces IGP and AICAR from PRFAR using the ammonia provided by the HisH subunit. The polypeptide is Imidazole glycerol phosphate synthase subunit HisF (Yersinia pseudotuberculosis serotype O:1b (strain IP 31758)).